Here is a 581-residue protein sequence, read N- to C-terminus: Arginine--tRNA ligase (581 aa).

The 'HIGH' region signature appears at 126-136 (PNLAKEMHVGH).

The protein belongs to the class-I aminoacyl-tRNA synthetase family. As to quaternary structure, monomer.

It is found in the cytoplasm. The enzyme catalyses tRNA(Arg) + L-arginine + ATP = L-arginyl-tRNA(Arg) + AMP + diphosphate. The polypeptide is Arginine--tRNA ligase (Shewanella piezotolerans (strain WP3 / JCM 13877)).